We begin with the raw amino-acid sequence, 120 residues long: Inner membrane protein YidG (120 aa).

Over 1–21 the chain is Cytoplasmic; it reads MPDSRKARRIADPGLQPERTS. A helical transmembrane segment spans residues 22-39; sequence LAWFRTMLGYGALMALAI. Topologically, residues 40-48 are periplasmic; sequence KHNWHQAGM. A helical transmembrane segment spans residues 49-68; it reads LFWISIGILAIVALILWHYT. Residues 69-90 lie on the Cytoplasmic side of the membrane; sequence RNRNLMDVTNSDFSQFHVVRDK. Residues 91-113 traverse the membrane as a helical segment; the sequence is FLISLAVLSLAILFAVTHIHQLI. The Periplasmic portion of the chain corresponds to 114 to 120; that stretch reads VFIERVA.

It is found in the cell inner membrane. This is Inner membrane protein YidG (yidG) from Escherichia coli O157:H7.